A 258-amino-acid chain; its full sequence is Ciliogenesis and planar polarity effector 2 (258 aa).

The tract at residues 51–258 (IDTASYKIFV…LPSSPESAPG (208 aa)) is small GTPase-like. The GTP site is built by serine 64, glycine 65, glycine 67, lysine 68, threonine 69, alanine 70, isoleucine 82, histidine 84, threonine 87, lysine 176, aspartate 178, and serine 206.

This sequence belongs to the small GTPase superfamily. Rab family. Interacts with FUZ. Associates with the CPLANE (ciliogenesis and planar polarity effectors) complex via its interaction with FUZ.

It localises to the cytoplasm. Its subcellular location is the cytoskeleton. It is found in the cilium basal body. The protein resides in the microtubule organizing center. The protein localises to the centrosome. It localises to the centriole. Functionally, required for efficient primary cilia initiation, regulating a late step in cilia initiation. Plays a role in the final maturation of the mother centriole and ciliary vesicle that allows extension of the ciliary axoneme. The chain is Ciliogenesis and planar polarity effector 2 (Cplane2) from Mus musculus (Mouse).